A 683-amino-acid polypeptide reads, in one-letter code: U4/U6 small nuclear ribonucleoprotein Prp3 (683 aa).

Positions 1–87 (MALSKRELDE…HSKSSSDRSR (87 aa)) constitute a PWI domain. A compositionally biased stretch (basic and acidic residues) spans 73–107 (GRSSRHSKSSSDRSRKRELKEVFGDDSEISKESSG). The disordered stretch occupies residues 73 to 135 (GRSSRHSKSS…IPGPPSESPG (63 aa)). Lysine 139 is covalently cross-linked (Glycyl lysine isopeptide (Lys-Gly) (interchain with G-Cter in SUMO2)). Residues 161–183 (SFISPPAPQPKTPSSSQPERLPI) are disordered. Residue serine 164 is modified to Phosphoserine. Glycyl lysine isopeptide (Lys-Gly) (interchain with G-Cter in SUMO2) cross-links involve residues lysine 244 and lysine 252. Residues 416 to 550 (NLVEHPAQLN…VHISVYRVRN (135 aa)) are mediates interaction with SART3. Serine 619 bears the Phosphoserine mark.

As to quaternary structure, component of the precatalytic spliceosome (spliceosome B complex). Component of the U4/U6-U5 tri-snRNP complex, a building block of the precatalytic spliceosome (spliceosome B complex). The U4/U6-U5 tri-snRNP complex is composed of the U4, U6 and U5 snRNAs and at least PRPF3, PRPF4, PRPF6, PRPF8, PRPF31, SNRNP200, TXNL4A, SNRNP40, SNRPB, SNRPD1, SNRPD2, SNRPD3, SNRPE, SNRPF, SNRPG, DDX23, CD2BP2, PPIH, SNU13, EFTUD2, SART1 and USP39, plus LSM2, LSM3, LSM4, LSM5, LSM6, LSM7 and LSM8. Interacts directly with PRPF4. Part of a heteromeric complex containing PPIH, PRPF3 and PRPF4 that is stable in the absence of RNA. Interacts with SART3; the interaction is direct and recruits the deubiquitinase USP4 to PRPF3. Interacts with PRPF19. Interacts ('Lys-63'-linked polyubiquitinated) with PRPF8 (via the MPN (JAB/Mov34) domain); may stabilize the U4/U6-U5 tri-snRNP complex. Interacts with ERCC6. Ubiquitinated. Undergoes 'Lys-63'-linked polyubiquitination by PRPF19 and deubiquitination by USP4. 'Lys-63'-linked ubiquitination increases the affinity for PRPF8 and may regulate the assembly of the U4/U6-U5 tri-snRNP complex.

The protein resides in the nucleus. The protein localises to the nucleus speckle. Functionally, plays a role in pre-mRNA splicing as component of the U4/U6-U5 tri-snRNP complex that is involved in spliceosome assembly, and as component of the precatalytic spliceosome (spliceosome B complex). The sequence is that of U4/U6 small nuclear ribonucleoprotein Prp3 (Prpf3) from Mus musculus (Mouse).